We begin with the raw amino-acid sequence, 434 residues long: Ribulose bisphosphate carboxylase-like protein (434 aa).

Mg(2+) contacts are provided by lysine 198, aspartate 200, and glutamate 201. N6-carboxylysine is present on lysine 198.

This sequence belongs to the RuBisCO large chain family. Type IV subfamily. Homodimer. It depends on Mg(2+) as a cofactor.

May be involved in sulfur metabolism and oxidative stress response. Does not show RuBisCO activity. The polypeptide is Ribulose bisphosphate carboxylase-like protein (Chlorobaculum thiosulfatiphilum (Chlorobium limicola f.sp. thiosulfatophilum)).